A 472-amino-acid chain; its full sequence is Ulvan lyase (472 aa).

Residues 1–21 (MIIKQYLLKISLCVLLLGCDS) form the signal peptide. Substrate is bound by residues Asn46 and Asn109. His110 serves as the catalytic Proton donor. Positions 112 and 130 each coordinate substrate. The active-site Proton acceptor is the Tyr175. 3 residues coordinate substrate: Arg191, His195, and Tyr233. His195 contacts Zn(2+). 3 residues coordinate Zn(2+): His251, Cys253, and His265. Substrate is bound at residue His265.

This sequence belongs to the polysaccharide lyase 25 family.

In terms of biological role, ulvan lyase involved in ulvan degradation. Ulvan is the main polysaccharide component of the Ulvales (green seaweed) cell wall. It is composed of disaccharide building blocks comprising 3-sulfated rhamnose (Rha3S) linked to D-glucuronic acid (GlcA), L-iduronic acid (IduA), or D-xylose (Xyl). Ulvan lyase catalyzes the endolytic cleavage of the glycosidic bond between Rha3S and the uronic acids GlcA or IduA, producing oligosaccharides that have unsaturated 4-deoxy-L-threo-hex-4-enopyranosiduronic acid (deltaUA) at the non-reducing end. This results eventually in the degradation of the ulvan polysaccharide into deltaUA-Rha3S disaccharides and deltaUA-Rha3S-Xyl-Rha3S tetrasaccharides. In Nonlabens ulvanivorans (Persicivirga ulvanivorans), this protein is Ulvan lyase.